A 553-amino-acid polypeptide reads, in one-letter code: Dihydroxy-acid dehydratase (553 aa).

Mg(2+) is bound at residue D78. Position 119 (C119) interacts with [2Fe-2S] cluster. D120 and K121 together coordinate Mg(2+). Position 121 is an N6-carboxylysine (K121). C191 contacts [2Fe-2S] cluster. E442 contacts Mg(2+). S468 serves as the catalytic Proton acceptor.

This sequence belongs to the IlvD/Edd family. As to quaternary structure, homodimer. It depends on [2Fe-2S] cluster as a cofactor. The cofactor is Mg(2+).

It carries out the reaction (2R)-2,3-dihydroxy-3-methylbutanoate = 3-methyl-2-oxobutanoate + H2O. The catalysed reaction is (2R,3R)-2,3-dihydroxy-3-methylpentanoate = (S)-3-methyl-2-oxopentanoate + H2O. It functions in the pathway amino-acid biosynthesis; L-isoleucine biosynthesis; L-isoleucine from 2-oxobutanoate: step 3/4. It participates in amino-acid biosynthesis; L-valine biosynthesis; L-valine from pyruvate: step 3/4. Functionally, functions in the biosynthesis of branched-chain amino acids. Catalyzes the dehydration of (2R,3R)-2,3-dihydroxy-3-methylpentanoate (2,3-dihydroxy-3-methylvalerate) into 2-oxo-3-methylpentanoate (2-oxo-3-methylvalerate) and of (2R)-2,3-dihydroxy-3-methylbutanoate (2,3-dihydroxyisovalerate) into 2-oxo-3-methylbutanoate (2-oxoisovalerate), the penultimate precursor to L-isoleucine and L-valine, respectively. The protein is Dihydroxy-acid dehydratase of Carboxydothermus hydrogenoformans (strain ATCC BAA-161 / DSM 6008 / Z-2901).